Here is an 872-residue protein sequence, read N- to C-terminus: N-acetyltransferase eso1 (872 aa).

The polymerase type-Y stretch occupies residues 1–591 (MELGKSKFSW…KQVKPKTYGR (591 aa)). One can recognise a UmuC domain in the interval 29-285 (VAHIDQDAFY…LKITDIRMLG (257 aa)). Residues 533 to 567 (SADETYTCEECEQKITLSERNEHEDYHIALSISRK) form a UBZ3-type zinc finger. Positions 540, 543, 555, and 559 each coordinate Zn(2+). The tract at residues 569–602 (RYNNLVPPSHDKPKQVKPKTYGRKTGSKHYAPLS) is disordered. The segment covering 583 to 595 (QVKPKTYGRKTGS) has biased composition (basic residues). Residues 592 to 872 (KTGSKHYAPL…KSLRYAVYES (281 aa)) are acetyltransferase. The CCHH-type zinc-finger motif lies at 653–677 (VTCSECSMEYNSTSEEDILLHSRFH).

The protein in the C-terminal section; belongs to the acetyltransferase family. ECO subfamily. It in the N-terminal section; belongs to the DNA polymerase type-Y family. Interacts with pds5.

The protein resides in the nucleus. Functionally, probable acetyltransferase required for the establishment of sister chromatid cohesion and couple the processes of cohesion and DNA replication to ensure that only sister chromatids become paired together. In contrast to the structural cohesins, the deposition and establishment factors are required only during S phase. The relevance of acetyltransferase function remains unclear. This is N-acetyltransferase eso1 (eso1) from Schizosaccharomyces pombe (strain 972 / ATCC 24843) (Fission yeast).